The chain runs to 2873 residues: MSTSDINKTIALLQSSKIKERNDALNNLENIAASKFRLNPKQFRQLTQAILALIKHESQIYFNNKSTTVDSRLSQASYNLRLLTEKSIEDTRIDFKYRTYLDLCMGIKDQFFVHSELLEPCSIDFIKTITSILNLSYVKEHLNRKEWSILYIFLVSLINNILDDCEGSFSNNGNNEKLLIDLYTALQNLLQCESSVSINYLQLYDNDNYFKLLRILDKTSELLKKENVIIIIIFRIINKLITVIATEKFKFVNKLIKIGIRLMVYFHHSHWEKLQEQFLIFINLPGTHDLINLHNLPKLIGDRYILSEISTQEDGDSINSQADNQDEVFLYNLGVLIHHLMKKLMSGSFELKTEDIGMCTINNSITWFNLKTIYSDSQNYKPWLLTLGVSRLLKSYYDLKQFINKQSNDPQTSLLLYSNGSPNKNKRQKLGSIADTISDSNSAIELCNKLIHSKESSDNQVLGLKLLTFYLELYTFEKPKEQSTESDSMDTTIGENTTFDFVISTTDNTFIDKNVVMKNILITFDDNSMNFWSSLCARSVLLDEILQSNHGGFKFKKSFSIQLLKLSLLLLKEPEVANIACNIIFKLVFEQKTNLSELIDDSVIIQLETLIDLSEINGPYKITEESFQFWYAINKLAIEVNLSKKNFLGRRIQDWMLAKWDITFSPGADFVSVGSSLANFIYWLSGNSISYSPTTTQKSTYEGDIYEFYYFAQSYDSLEKFLCLKSVSDSSETIKFDIISIASSDRIDAILNKVNSTFMVFDRSSVTSGSLFCWIIVLSNIVAKVRSMKFVTHELTGLQFQLSAGLNSFKDITLSCEEIIDVMEMVNKFLPTDPDTIQIFIQNFPSEKLVNIIKFDYPGLADKDNRKSVPEDGFGWEFSRVRDATTPPSTTSTSTISLAKLNYKKIQSLEVSKFIMFTADIEGKLQSDILTAFLNYVETLESDDFLPSLLFVVENIFTDHSAHFIDEIQLAKLLRIINEKLLSTQNYERNEFVSVVISRFLSATAQVWINSSDNSLASDFYSLVSRLYSSGRDDLILTETSIVEYCRFLAHFITHNDERVLSNTDIKNELLEKFSKSPNNIKDRLANSFGELVSLSTVQQQGQIYSDLFDRFVNPEQSVESAGTYTKFFTNLSQSSLHILRLALFNLLECSRFPFFISYLEICLKEFCMIMKLDNANKLFKIFKFEILRNWWKYDSIDAFPFVLFSYTDLSSFYRDNYRELIAVALSTKSRSPEISNAFVEQLADLKQSHSETLVAESLSIIVPLSYSKDGVRNDVFQILLDYLKNSFKQEFIDKLPLIVLEIIKFTEISNEKSFESLGTDGLVTMLLNDTGFSSTIQTAGEMVISFDSSVQLLKKLVEKYHQPEHETFWSSRQIYFLIRRLSISLKLATTFEQKVIFLRKFKFVLVLGGKKSIDYAVSRLLVDTLCPLLSNEPKMSADVFLILQSLTDVYSHRYTYDKSISLIIQIINSLLETEAVDRSRALLDCIDDFVNTGDQDRAICQLLKSSVAILKGQAVEIESSLIELCLEESGPDYIKQMILISRIFGNVVFATTHSGSKLPVVEKLLALSKNQIQEFSDGYKLWIANYLSDFYIEGGCKEQIKALTFDEYEGIPVNDFENEVRSFDFTLKSIEQYIYKDDFEAAACAESIIGVLIRKYETSKREVSKFLNFETTLEKHSDSILPIDFHTCVILNDKADVEYLGDELIDIINNFESFLSNGTELWCTKLYLALLQELAVETSIAPLLSTFVIMVPEFAKTSLPVLVCNYLAIKRTHSQDRIISLLNEFLHTSKKSESSIKVFLQILILIRVGAKIFKKPVFANVFAKIDKLKFYQLACEVKQFKTALMLFEDVASDTNSDVHLQDHYQTLQHVYESLDDDDLVFGLPERTTLEYSISMINRVGNSDDRLRFSSAGFDTDMILNQEPSYSNIVGSLSAAGLLGVSRALSKNTSFASNDDSQYEWSWKLSKWDLPISKNATKENEVIYKTLKQIHDFPMNSQDICSSSLLNAVDNKVSATNMSVKEFKQEGINWLKTISTVASIAEIANATGDNIIPMTNQFSEKTQWFGEVEFSMFENLLLARQTTFGLINDRPISSLPSDTAWMGALCDLVRYNNLARTNGEYQKMVTSTMLVDVVSKKLQSSSLDMVAFNANNLASFQTAQTLWCQGNTNVPVMIMKDLYAAGGIDMSENILKVDKCLIRAMMVDWMSQSRQEVASSIMEKYVMPTEELSNHMIDLQQQSKIFSILARFCEEQYKFKSLSEKISKLEKRVLNKENEIKDLKKQYEKVTVTHAEQKQVQQYYNRLKKQFVSESKDLESLRKSKQLFSSKAVQYYMKSIIVDDFEEENLDKFFSLWLEQSGNNELNQSIQSNLLALPSYKLVSWCTQLISRLSNETNNFQILLKKLIINMCLDHPHHSLYLLLSLKKHKPNTNEVLNPSLLSRCAAAQAIWDQLLLQDHRYISDVLLPIDGFTDQCITLAAYKVSKGKSIDLTKFSAGDYWLNELPAIPPPTETIRVDPSKQYKNVPVLHSIDKKISIATSGLSLPKIANFILSNGTEHRVLLKHGTDGIRQDSIMEQVFNKVNNIFAKDRECNKRGLTIRTYNAVPLGPLSGIIEFVPNSMAFIDVISGYHQMHDKISYDKAREMMKSCQSGDKQKRIHSFEQIEAKIKPVMRYFFQETFLTSDSWFESRVKYTHGIATSSIVGHILGLGDRHCNNILIDRSTGEPIHIDLGVAFDQGKRLAIPETVPFRLTRDIVDGFGVTGVEGMFKKSCEHTLRVLRTNKEHIISILDVLRWDPLYSWTLSRFKKRKLQEDETGPGVQPEEEGSEAGTAIMTVIEKLNANGLSTEAAVRELIQEATSTQNLALIYFGWSPFY.

In terms of domain architecture, FAT spans 1830–2425; the sequence is KFYQLACEVK…LYLLLSLKKH (596 aa). In terms of domain architecture, PI3K/PI4K catalytic spans 2530-2839; the sequence is DKKISIATSG…AIMTVIEKLN (310 aa). Residues 2536–2542 are G-loop; the sequence is ATSGLSL. The catalytic loop stretch occupies residues 2706 to 2714; it reads GLGDRHCNN. Residues 2726-2750 form an activation loop region; the sequence is HIDLGVAFDQGKRLAIPETVPFRLT. The FATC domain occupies 2841-2873; that stretch reads NGLSTEAAVRELIQEATSTQNLALIYFGWSPFY.

It belongs to the PI3/PI4-kinase family. ATM subfamily. In terms of assembly, associates with DNA double-strand breaks.

It localises to the nucleus. Its subcellular location is the chromosome. It is found in the telomere. The enzyme catalyses L-seryl-[protein] + ATP = O-phospho-L-seryl-[protein] + ADP + H(+). It catalyses the reaction L-threonyl-[protein] + ATP = O-phospho-L-threonyl-[protein] + ADP + H(+). Serine/threonine protein kinase which activates checkpoint signaling upon genotoxic stresses such as ionizing radiation (IR), ultraviolet light (UV), or DNA replication stalling, thereby acting as a DNA damage sensor. Recognizes the substrate consensus sequence [ST]-Q. Phosphorylates histone H2A to form H2AS128ph (gamma-H2A) at sites of DNA damage, involved in the regulation of DNA damage response mechanism. Required for the control of telomere length and genome stability. This is Serine/threonine-protein kinase TEL1 (TEL1) from Candida albicans (strain SC5314 / ATCC MYA-2876) (Yeast).